A 119-amino-acid chain; its full sequence is Large ribosomal subunit protein uL22 (119 aa).

Belongs to the universal ribosomal protein uL22 family. In terms of assembly, part of the 50S ribosomal subunit.

Its function is as follows. This protein binds specifically to 23S rRNA; its binding is stimulated by other ribosomal proteins, e.g. L4, L17, and L20. It is important during the early stages of 50S assembly. It makes multiple contacts with different domains of the 23S rRNA in the assembled 50S subunit and ribosome. Functionally, the globular domain of the protein is located near the polypeptide exit tunnel on the outside of the subunit, while an extended beta-hairpin is found that lines the wall of the exit tunnel in the center of the 70S ribosome. The chain is Large ribosomal subunit protein uL22 from Rickettsia felis (strain ATCC VR-1525 / URRWXCal2) (Rickettsia azadi).